The following is a 249-amino-acid chain: DNA repair protein RecO (249 aa).

This sequence belongs to the RecO family.

Involved in DNA repair and RecF pathway recombination. The chain is DNA repair protein RecO from Mycoplasma mycoides subsp. mycoides SC (strain CCUG 32753 / NCTC 10114 / PG1).